Here is a 165-residue protein sequence, read N- to C-terminus: 2-C-methyl-D-erythritol 2,4-cyclodiphosphate synthase (165 aa).

A divalent metal cation contacts are provided by Asp-13 and His-15. 4-CDP-2-C-methyl-D-erythritol 2-phosphate contacts are provided by residues Asp-13–His-15 and His-39–Ser-40. Position 47 (His-47) interacts with a divalent metal cation. 4-CDP-2-C-methyl-D-erythritol 2-phosphate contacts are provided by residues Asp-61–Gly-63 and Phe-141.

The protein belongs to the IspF family. Homotrimer. Requires a divalent metal cation as cofactor.

The catalysed reaction is 4-CDP-2-C-methyl-D-erythritol 2-phosphate = 2-C-methyl-D-erythritol 2,4-cyclic diphosphate + CMP. Its pathway is isoprenoid biosynthesis; isopentenyl diphosphate biosynthesis via DXP pathway; isopentenyl diphosphate from 1-deoxy-D-xylulose 5-phosphate: step 4/6. Its function is as follows. Involved in the biosynthesis of isopentenyl diphosphate (IPP) and dimethylallyl diphosphate (DMAPP), two major building blocks of isoprenoid compounds. Catalyzes the conversion of 4-diphosphocytidyl-2-C-methyl-D-erythritol 2-phosphate (CDP-ME2P) to 2-C-methyl-D-erythritol 2,4-cyclodiphosphate (ME-CPP) with a corresponding release of cytidine 5-monophosphate (CMP). The protein is 2-C-methyl-D-erythritol 2,4-cyclodiphosphate synthase of Thermotoga neapolitana (strain ATCC 49049 / DSM 4359 / NBRC 107923 / NS-E).